The chain runs to 174 residues: Gamma-crystallin C (174 aa).

2 consecutive Beta/gamma crystallin 'Greek key' domains span residues 2–40 and 41–83; these read GKIT…RVES and GCWM…CLIP. The residue at position 23 (Cys23) is an S-methylcysteine. Residues 84-87 are connecting peptide; it reads QTVS. Beta/gamma crystallin 'Greek key' domains lie at 88–128 and 129–171; these read HRLR…HVLE and GCWV…RRVV.

The protein belongs to the beta/gamma-crystallin family. As to quaternary structure, monomer.

In terms of biological role, crystallins are the dominant structural components of the vertebrate eye lens. The sequence is that of Gamma-crystallin C (CRYGC) from Homo sapiens (Human).